Here is a 654-residue protein sequence, read N- to C-terminus: Chaperone protein DnaK (654 aa).

A Phosphothreonine; by autocatalysis modification is found at Thr-205. The segment at 592 to 654 is disordered; that stretch reads ELERQMQQIG…EVEILDDKKP (63 aa). Polar residues predominate over residues 608–621; sequence AGQSETQSTGPGSY. Over residues 622 to 636 the composition is skewed to low complexity; it reads QESSNQSSQHQTNNN.

This sequence belongs to the heat shock protein 70 family.

Its function is as follows. Acts as a chaperone. The sequence is that of Chaperone protein DnaK from Protochlamydia amoebophila (strain UWE25).